Here is a 225-residue protein sequence, read N- to C-terminus: LysM and putative peptidoglycan-binding domain-containing protein 1 (225 aa).

Residues Ser23 and Ser33 each carry the phosphoserine modification. The LysM domain occupies 40 to 84; it reads LEHQLAPGDTLAGLALKYGVTMEQIKRANRLYTNDSIFLKKTLHI. Positions 97–153 are disordered; sequence LDSEEEKDGEEAVQPSKDEVRPHSAERKKRERGLGHANGEPLPTAGQEPARHDLSAS. A compositionally biased stretch (acidic residues) spans 98–107; that stretch reads DSEEEKDGEE. Ser99 carries the phosphoserine modification. A compositionally biased stretch (basic and acidic residues) spans 112–121; the sequence is SKDEVRPHSA. A phosphoserine mark is found at Ser164, Ser179, Ser192, and Ser210. A disordered region spans residues 170–225; that stretch reads AAQKLKKGESGIPGEDSSLHLSSPRMQQRAVLGPVPLTQTSRTRTLRDQEDEIFKL. Basic and acidic residues predominate over residues 214-225; sequence TLRDQEDEIFKL.

This chain is LysM and putative peptidoglycan-binding domain-containing protein 1 (LYSMD1), found in Bos taurus (Bovine).